The chain runs to 935 residues: Intimin (935 aa).

A signal peptide spans Met1–Gly41. The tract at residues Asn40–Thr153 is peptidoglycan-binding. The sufficient for homodimerization stretch occupies residues Asn40 to Thr153. The interval Asn40–Thr212 is required for periplasmic localization. A LysM domain is found at Leu63–Leu112. An inverse autotransporter region spans residues Tyr210 to Phe411. The signature sequence for beta-barrel assembly machinery (BAM), which recognizes the unfolded beta-barrel in the periplasm stretch occupies residues Leu402–Phe411. 2 consecutive Big-1 domains span residues Val560–Val653 and Ile660–Phe754. Residues Gly790–Ser834 enclose the BIG2 domain. Cys859 and Cys933 are oxidised to a cystine.

It belongs to the intimin/invasin family. In terms of assembly, homodimer. Interacts with Tir.

Its subcellular location is the cell outer membrane. Its function is as follows. An inverse autotransporter. Adhesin, which mediates attachment to the human intestine epithelial cells. Necessary for the production of attaching and effacing lesions on infected human tissue culture cells. Anchored to the outer membrane by binding to peptidoglycan (PGN) via its periplasmic domain, thus helping in receptor interactions during host invasion. PGN-binding may also aid in resisting mechanical and chemical stress during transit of the bacterium through the gastrointestinal tract of the host. The sequence is that of Intimin (eae) from Escherichia coli O111:H-.